A 474-amino-acid chain; its full sequence is ATP synthase subunit beta 2 (474 aa).

151–158 (GGAGVGKT) lines the ATP pocket.

The protein belongs to the ATPase alpha/beta chains family. F-type ATPases have 2 components, CF(1) - the catalytic core - and CF(0) - the membrane proton channel. CF(1) has five subunits: alpha(3), beta(3), gamma(1), delta(1), epsilon(1). CF(0) has four main subunits: a(1), b(1), b'(1) and c(9-12).

It is found in the cell inner membrane. The enzyme catalyses ATP + H2O + 4 H(+)(in) = ADP + phosphate + 5 H(+)(out). Functionally, produces ATP from ADP in the presence of a proton gradient across the membrane. The catalytic sites are hosted primarily by the beta subunits. The protein is ATP synthase subunit beta 2 of Dinoroseobacter shibae (strain DSM 16493 / NCIMB 14021 / DFL 12).